Reading from the N-terminus, the 508-residue chain is Histidine ammonia-lyase (508 aa).

Residues 143–145 (ASG) constitute a cross-link (5-imidazolinone (Ala-Gly)). S144 bears the 2,3-didehydroalanine (Ser) mark.

Belongs to the PAL/histidase family. Post-translationally, contains an active site 4-methylidene-imidazol-5-one (MIO), which is formed autocatalytically by cyclization and dehydration of residues Ala-Ser-Gly.

It localises to the cytoplasm. The catalysed reaction is L-histidine = trans-urocanate + NH4(+). Its pathway is amino-acid degradation; L-histidine degradation into L-glutamate; N-formimidoyl-L-glutamate from L-histidine: step 1/3. The chain is Histidine ammonia-lyase from Caldanaerobacter subterraneus subsp. tengcongensis (strain DSM 15242 / JCM 11007 / NBRC 100824 / MB4) (Thermoanaerobacter tengcongensis).